The chain runs to 164 residues: HTH-type transcriptional regulator IscR (164 aa).

An HTH rrf2-type domain is found at 2 to 131; the sequence is RLTSKGRYAV…SSISLEELVN (130 aa). Positions 28–51 form a DNA-binding region, H-T-H motif; it reads LADISERQGISLSYLEQLFSRLRK. [2Fe-2S] cluster is bound by residues cysteine 92, cysteine 98, and cysteine 104. Residues 141–164 form a disordered region; the sequence is RQDNDKRRAPNGRAQETINVNLRP. Polar residues predominate over residues 154–164; the sequence is AQETINVNLRP.

[2Fe-2S] cluster serves as cofactor.

Its function is as follows. Regulates the transcription of several operons and genes involved in the biogenesis of Fe-S clusters and Fe-S-containing proteins. This is HTH-type transcriptional regulator IscR from Photorhabdus laumondii subsp. laumondii (strain DSM 15139 / CIP 105565 / TT01) (Photorhabdus luminescens subsp. laumondii).